The sequence spans 72 residues: SRY-related protein AES1 (72 aa).

The HMG box DNA-binding region spans valine 1 to lysine 69.

Its subcellular location is the nucleus. In Alligator mississippiensis (American alligator), this protein is SRY-related protein AES1.